We begin with the raw amino-acid sequence, 351 residues long: Ribosomal RNA small subunit methyltransferase H (351 aa).

Residues 48–50, Asp67, Phe94, Asp115, and Gln122 contribute to the S-adenosyl-L-methionine site; that span reads GGY. The interval 274 to 351 is disordered; sequence AAQASRHVPG…PAPQGRGPRR (78 aa).

This sequence belongs to the methyltransferase superfamily. RsmH family.

It is found in the cytoplasm. It catalyses the reaction cytidine(1402) in 16S rRNA + S-adenosyl-L-methionine = N(4)-methylcytidine(1402) in 16S rRNA + S-adenosyl-L-homocysteine + H(+). In terms of biological role, specifically methylates the N4 position of cytidine in position 1402 (C1402) of 16S rRNA. This chain is Ribosomal RNA small subunit methyltransferase H, found in Methylorubrum extorquens (strain ATCC 14718 / DSM 1338 / JCM 2805 / NCIMB 9133 / AM1) (Methylobacterium extorquens).